Here is a 749-residue protein sequence, read N- to C-terminus: Transcription factor RFX3 (749 aa).

Residues 183-258 (HLQWLLDNYE…YHYYGIRVKP (76 aa)) constitute a DNA-binding region (RFX-type winged-helix). The interval 663–699 (VSPGNLDKDEGSEVESETDEDLDDSSEPRAKREKTEL) is disordered. Residues 674–687 (SEVESETDEDLDDS) show a composition bias toward acidic residues. The segment covering 688–698 (SEPRAKREKTE) has biased composition (basic and acidic residues).

It belongs to the RFX family. Heterodimer; heterodimerizes with RFX1 and RFX2, and RFX6. As to expression, expressed in ciliated cells of the node and in the ciliated ependymal cells of the subcommissural organ (SCO), choroid plexuses (CP) and ventricular walls during embryonic and postnatal development. Expressed in developing and mature pancreatic endocrine cells during embryogenesis and in adults (at protein level).

Its subcellular location is the nucleus. Functionally, transcription factor required for ciliogenesis and islet cell differentiation during endocrine pancreas development. Essential for the differentiation of nodal monocilia and left-right asymmetry specification during embryogenesis. Required for the biogenesis of motile cilia by governing growth and beating efficiency of motile cells. Also required for ciliated ependymal cell differentiation. Together with RFX6, participates in the differentiation of 4 of the 5 islet cell types during endocrine pancreas development, with the exception of pancreatic PP (polypeptide-producing) cells. Regulates transcription by forming a heterodimer with another RFX protein and binding to the X-box in the promoter of target genes. Regulates the expression of genes involved in ciliary assembly (DYNC2LI1, FOXJ1 and BBS4) and genes involved in ciliary motility (DNAH11, DNAH9 and DNAH5). Represses transcription of MAP1A in non-neuronal cells but not in neuronal cells. The protein is Transcription factor RFX3 (Rfx3) of Mus musculus (Mouse).